Consider the following 284-residue polypeptide: Malonyl-[acyl-carrier protein] O-methyltransferase (284 aa).

This sequence belongs to the methyltransferase superfamily.

It catalyses the reaction malonyl-[ACP] + S-adenosyl-L-methionine = malonyl-[ACP] methyl ester + S-adenosyl-L-homocysteine. It participates in cofactor biosynthesis; biotin biosynthesis. Functionally, converts the free carboxyl group of a malonyl-thioester to its methyl ester by transfer of a methyl group from S-adenosyl-L-methionine (SAM). It allows to synthesize pimeloyl-ACP via the fatty acid synthetic pathway. The polypeptide is Malonyl-[acyl-carrier protein] O-methyltransferase (Legionella pneumophila subsp. pneumophila (strain Philadelphia 1 / ATCC 33152 / DSM 7513)).